We begin with the raw amino-acid sequence, 68 residues long: Sec-independent protein translocase protein TatA (68 aa).

Residues 1-21 (MGSFSIWHWLIVLAVVLLLFG) traverse the membrane as a helical segment. The interval 42–68 (GMGDDEVASADKSVDGKTVDHKSDEVR) is disordered. The segment covering 53–68 (KSVDGKTVDHKSDEVR) has biased composition (basic and acidic residues).

This sequence belongs to the TatA/E family. In terms of assembly, the Tat system comprises two distinct complexes: a TatABC complex, containing multiple copies of TatA, TatB and TatC subunits, and a separate TatA complex, containing only TatA subunits. Substrates initially bind to the TatABC complex, which probably triggers association of the separate TatA complex to form the active translocon.

The protein localises to the cell inner membrane. Functionally, part of the twin-arginine translocation (Tat) system that transports large folded proteins containing a characteristic twin-arginine motif in their signal peptide across membranes. TatA could form the protein-conducting channel of the Tat system. The protein is Sec-independent protein translocase protein TatA of Rhizobium meliloti (strain 1021) (Ensifer meliloti).